A 444-amino-acid polypeptide reads, in one-letter code: Phosphoglucosamine mutase (444 aa).

Ser102 serves as the catalytic Phosphoserine intermediate. Residues Ser102, Asp241, Asp243, and Asp245 each coordinate Mg(2+). Ser102 carries the phosphoserine modification.

This sequence belongs to the phosphohexose mutase family. Mg(2+) serves as cofactor. Activated by phosphorylation.

The enzyme catalyses alpha-D-glucosamine 1-phosphate = D-glucosamine 6-phosphate. In terms of biological role, catalyzes the conversion of glucosamine-6-phosphate to glucosamine-1-phosphate. In Actinobacillus succinogenes (strain ATCC 55618 / DSM 22257 / CCUG 43843 / 130Z), this protein is Phosphoglucosamine mutase.